A 123-amino-acid chain; its full sequence is Large ribosomal subunit protein uL18 (123 aa).

The protein belongs to the universal ribosomal protein uL18 family. Part of the 50S ribosomal subunit; part of the 5S rRNA/L5/L18/L25 subcomplex. Contacts the 5S and 23S rRNAs.

This is one of the proteins that bind and probably mediate the attachment of the 5S RNA into the large ribosomal subunit, where it forms part of the central protuberance. The sequence is that of Large ribosomal subunit protein uL18 from Bifidobacterium longum (strain DJO10A).